A 385-amino-acid polypeptide reads, in one-letter code: Uroporphyrinogen decarboxylase (385 aa).

Substrate contacts are provided by residues 53–57, D102, Y179, S234, and H363; that span reads RQAGR.

Belongs to the uroporphyrinogen decarboxylase family. Homodimer.

It localises to the cytoplasm. The enzyme catalyses uroporphyrinogen III + 4 H(+) = coproporphyrinogen III + 4 CO2. The protein operates within porphyrin-containing compound metabolism; protoporphyrin-IX biosynthesis; coproporphyrinogen-III from 5-aminolevulinate: step 4/4. In terms of biological role, catalyzes the decarboxylation of four acetate groups of uroporphyrinogen-III to yield coproporphyrinogen-III. The protein is Uroporphyrinogen decarboxylase of Tropheryma whipplei (strain TW08/27) (Whipple's bacillus).